The primary structure comprises 401 residues: Tyrosine--tRNA ligase (401 aa).

The short motif at 41-50 (PSRPDLHLGH) is the 'HIGH' region element. The short motif at 225–229 (KMSKS) is the 'KMSKS' region element. Lys228 lines the ATP pocket. The S4 RNA-binding domain maps to 334 to 395 (KNIVDLLVEI…GKRKFYRISG (62 aa)).

This sequence belongs to the class-I aminoacyl-tRNA synthetase family. TyrS type 2 subfamily. In terms of assembly, homodimer.

It is found in the cytoplasm. The catalysed reaction is tRNA(Tyr) + L-tyrosine + ATP = L-tyrosyl-tRNA(Tyr) + AMP + diphosphate + H(+). Functionally, catalyzes the attachment of tyrosine to tRNA(Tyr) in a two-step reaction: tyrosine is first activated by ATP to form Tyr-AMP and then transferred to the acceptor end of tRNA(Tyr). In Thermotoga maritima (strain ATCC 43589 / DSM 3109 / JCM 10099 / NBRC 100826 / MSB8), this protein is Tyrosine--tRNA ligase.